We begin with the raw amino-acid sequence, 115 residues long: U3-lycotoxin-Ls1v (115 aa).

An N-terminal signal peptide occupies residues 1–20; that stretch reads MKFVLLFGVLLVTLFSHSSA. A propeptide spanning residues 21-44 is cleaved from the precursor; that stretch reads EMLDDFDQADEDELLSLIEKEEAR. Disulfide bonds link Cys-48-Cys-63, Cys-55-Cys-72, Cys-62-Cys-87, and Cys-74-Cys-85.

Belongs to the neurotoxin 19 (CSTX) family. 01 subfamily. Expressed by the venom gland.

It is found in the secreted. The sequence is that of U3-lycotoxin-Ls1v from Lycosa singoriensis (Wolf spider).